The following is a 210-amino-acid chain: Outer-membrane lipoprotein LolB (210 aa).

A signal peptide spans 1–26 (MSKLKIDTKRRFSLLIALVLIISLSS). C27 is lipidated: N-palmitoyl cysteine. Residue C27 is the site of S-diacylglycerol cysteine attachment.

This sequence belongs to the LolB family. As to quaternary structure, monomer.

Its subcellular location is the cell outer membrane. Functionally, plays a critical role in the incorporation of lipoproteins in the outer membrane after they are released by the LolA protein. This chain is Outer-membrane lipoprotein LolB, found in Francisella tularensis subsp. novicida (strain U112).